A 176-amino-acid polypeptide reads, in one-letter code: NAD(P)H-quinone oxidoreductase subunit J (176 aa).

The protein belongs to the complex I 30 kDa subunit family. In terms of assembly, NDH-1 can be composed of about 15 different subunits; different subcomplexes with different compositions have been identified which probably have different functions.

The protein resides in the cellular thylakoid membrane. It catalyses the reaction a plastoquinone + NADH + (n+1) H(+)(in) = a plastoquinol + NAD(+) + n H(+)(out). It carries out the reaction a plastoquinone + NADPH + (n+1) H(+)(in) = a plastoquinol + NADP(+) + n H(+)(out). NDH-1 shuttles electrons from an unknown electron donor, via FMN and iron-sulfur (Fe-S) centers, to quinones in the respiratory and/or the photosynthetic chain. The immediate electron acceptor for the enzyme in this species is believed to be plastoquinone. Couples the redox reaction to proton translocation, and thus conserves the redox energy in a proton gradient. Cyanobacterial NDH-1 also plays a role in inorganic carbon-concentration. This chain is NAD(P)H-quinone oxidoreductase subunit J, found in Prochlorococcus marinus subsp. pastoris (strain CCMP1986 / NIES-2087 / MED4).